Consider the following 441-residue polypeptide: Ribulose bisphosphate carboxylase large chain (441 aa).

Lys-5 is modified (N6,N6,N6-trimethyllysine). The substrate site is built by Asn-114 and Thr-164. Lys-166 serves as the catalytic Proton acceptor. Lys-168 is a binding site for substrate. Mg(2+)-binding residues include Lys-192, Asp-194, and Glu-195. Lys-192 is subject to N6-carboxylysine. The active-site Proton acceptor is the His-285. Residues Arg-286, His-318, and Ser-370 each coordinate substrate.

Belongs to the RuBisCO large chain family. Type I subfamily. In terms of assembly, heterohexadecamer of 8 large chains and 8 small chains; disulfide-linked. The disulfide link is formed within the large subunit homodimers. Requires Mg(2+) as cofactor. The disulfide bond which can form in the large chain dimeric partners within the hexadecamer appears to be associated with oxidative stress and protein turnover.

The protein localises to the plastid. Its subcellular location is the chloroplast. It catalyses the reaction 2 (2R)-3-phosphoglycerate + 2 H(+) = D-ribulose 1,5-bisphosphate + CO2 + H2O. The enzyme catalyses D-ribulose 1,5-bisphosphate + O2 = 2-phosphoglycolate + (2R)-3-phosphoglycerate + 2 H(+). RuBisCO catalyzes two reactions: the carboxylation of D-ribulose 1,5-bisphosphate, the primary event in carbon dioxide fixation, as well as the oxidative fragmentation of the pentose substrate in the photorespiration process. Both reactions occur simultaneously and in competition at the same active site. The protein is Ribulose bisphosphate carboxylase large chain of Pellaea rotundifolia (Button fern).